Here is an 80-residue protein sequence, read N- to C-terminus: Trefoil factor 3 (80 aa).

Residues 1 to 21 (MEARVLWLLALVLALGSSSLA) form the signal peptide. Residues 30 to 73 (NLCAVPAKNRVDCGYPEISPEQCVNRGCCFDSSIPEVPWCFKPL) enclose the P-type domain. 3 cysteine pairs are disulfide-bonded: cysteine 32-cysteine 58, cysteine 42-cysteine 57, and cysteine 52-cysteine 69.

In terms of assembly, monomer. Homodimer; disulfide-linked.

The protein localises to the secreted. It localises to the extracellular space. Its subcellular location is the extracellular matrix. The protein resides in the cytoplasm. Its function is as follows. Involved in the maintenance and repair of the intestinal mucosa. Promotes the mobility of epithelial cells in healing processes (motogen). The sequence is that of Trefoil factor 3 (TFF3) from Felis catus (Cat).